Reading from the N-terminus, the 568-residue chain is Lariat debranching enzyme (568 aa).

Positions 8, 10, 39, and 84 each coordinate a divalent metal cation. The interval 124-154 (SGIFKSHDFKKGHFEFPPYNPETLRSVYHIR) is lariat recognition loop. The a divalent metal cation site is built by His-174, His-226, and His-228. A disordered region spans residues 388–568 (IYGERGGKGA…TAVEDEESDS (181 aa)). Positions 417–428 (PSDTSGLSSSYN) are enriched in polar residues. Residues 432 to 444 (ITIEDEWEEEEDG) show a composition bias toward acidic residues. Residues 467–480 (DSDRDSSPQRETAK) are compositionally biased toward basic and acidic residues. Thr-478 carries the phosphothreonine modification. Residues 534–549 (GETTQSSAGQTGGTPQ) show a composition bias toward low complexity. A Phosphoserine modification is found at Ser-568.

It belongs to the lariat debranching enzyme family. The cofactor is Fe(2+). Zn(2+) serves as cofactor. Requires Mn(2+) as cofactor.

Its subcellular location is the nucleus. With respect to regulation, active in presence of diverse metals including Fe(2+), Zn(2+), Mn(2+). Also activated by Ca(2+). Binds two metal cations in two adjacent alpha and beta metal-binding pockets. Cleaves the 2'-5' phosphodiester linkage at the branch point of excised lariat intron RNA and converts them into linear molecules that can be subsequently degraded, thereby facilitating ribonucleotide turnover. Linked to its role in pre-mRNA processing mechanism, may also participate in retrovirus replication and have an antiviral cell-intrinsic defense function. The sequence is that of Lariat debranching enzyme (dbr1) from Danio rerio (Zebrafish).